Here is a 565-residue protein sequence, read N- to C-terminus: Hemagglutinin-neuraminidase (565 aa).

The Intravirion portion of the chain corresponds to 1–19; the sequence is MVAEDAPVRATCRVLFRTT. A helical transmembrane segment spans residues 20 to 40; sequence TLIFLCTLLALSISILYESLI. Topologically, residues 41 to 565 are virion surface; it reads TQKQIMSQAG…VPFIRQVTLS (525 aa). N-linked (GlcNAc...) asparagine; by host glycosylation occurs at N139. 3 disulfide bridges follow: C161–C185, C175–C236, and C227–C240. The tract at residues 223–228 is involved in neuraminidase activity; sequence NRKSCS. A glycan (N-linked (GlcNAc...) asparagine; by host) is linked at N267. Disulfide bonds link C333-C454, C365-C375, and C448-C458. N-linked (GlcNAc...) asparagine; by host glycosylation occurs at N504. A disulfide bridge connects residues C528 and C539.

It belongs to the paramyxoviruses hemagglutinin-neuraminidase family. As to quaternary structure, homotetramer; composed of disulfide-linked homodimers. Interacts with F protein trimer.

It is found in the virion membrane. The protein resides in the host cell membrane. It carries out the reaction Hydrolysis of alpha-(2-&gt;3)-, alpha-(2-&gt;6)-, alpha-(2-&gt;8)- glycosidic linkages of terminal sialic acid residues in oligosaccharides, glycoproteins, glycolipids, colominic acid and synthetic substrates.. Attaches the virus to sialic acid-containing cell receptors and thereby initiating infection. Binding of HN protein to the receptor induces a conformational change that allows the F protein to trigger virion/cell membranes fusion. Functionally, neuraminidase activity ensures the efficient spread of the virus by dissociating the mature virions from the neuraminic acid containing glycoproteins. The protein is Hemagglutinin-neuraminidase (HN) of Canis lupus familiaris (Dog).